The chain runs to 523 residues: Cryptochrome DASH (523 aa).

A Photolyase/cryptochrome alpha/beta domain is found at 6 to 142 (RVIICLLRND…KYQTFWGSTL (137 aa)). 2 disordered regions span residues 174–211 (RPTFQMPDKLKPLPSGLEEGSVPSHEDFDQQDPLTDPR) and 486–523 (KPAGSWEKSARRGKGPSHTPKQHKNRGIDFYFSRNKDV). The segment covering 496 to 510 (RRGKGPSHTPKQHKN) has biased composition (basic residues).

It belongs to the DNA photolyase class-1 family. FAD serves as cofactor. Requires (6R)-5,10-methylene-5,6,7,8-tetrahydrofolate as cofactor.

In terms of biological role, may have a photoreceptor function. Has weak cyclobutyl pyrimidine photolyase activity when expressed in E.coli and when tested in vitro. This Xenopus laevis (African clawed frog) protein is Cryptochrome DASH (cry-dash).